The sequence spans 185 residues: Ribosome-recycling factor (185 aa).

This sequence belongs to the RRF family.

The protein localises to the cytoplasm. In terms of biological role, responsible for the release of ribosomes from messenger RNA at the termination of protein biosynthesis. May increase the efficiency of translation by recycling ribosomes from one round of translation to another. The polypeptide is Ribosome-recycling factor (Aeromonas salmonicida (strain A449)).